We begin with the raw amino-acid sequence, 444 residues long: S-locus-specific glycoprotein BS29-1 (444 aa).

The N-terminal stretch at 1 to 28 (MRGVIPNYHHSYTLLFFVILVLFPHVFS) is a signal peptide. One can recognise a Bulb-type lectin domain in the interval 31-159 (TLSPNEALTI…KTTALDRFMW (129 aa)). N-linked (GlcNAc...) asparagine glycans are attached at residues N43, N125, N180, N243, and N396. One can recognise a PAN domain in the interval 356–437 (CGEGDGFLRM…GGQDLYLKVA (82 aa)). 2 cysteine pairs are disulfide-bonded: C387/C412 and C395/C397.

In terms of tissue distribution, stigma.

Involved in sporophytic self-incompatibility system (the inability of flowering plants to achieve self-fertilization). The chain is S-locus-specific glycoprotein BS29-1 (SLSG) from Brassica oleracea var. alboglabra (Chinese kale).